A 142-amino-acid polypeptide reads, in one-letter code: Large ribosomal subunit protein uL13 (142 aa).

Belongs to the universal ribosomal protein uL13 family. Part of the 50S ribosomal subunit.

In terms of biological role, this protein is one of the early assembly proteins of the 50S ribosomal subunit, although it is not seen to bind rRNA by itself. It is important during the early stages of 50S assembly. The sequence is that of Large ribosomal subunit protein uL13 from Chromobacterium violaceum (strain ATCC 12472 / DSM 30191 / JCM 1249 / CCUG 213 / NBRC 12614 / NCIMB 9131 / NCTC 9757 / MK).